The sequence spans 460 residues: MEMYFKRMKDEWTGLVEQADPLIRAKAAEIAVAHAHYLSIEFYRIVRIDPHAEEFLSNEQVERQLKSAMERWIINVLSAQVDDVERLIQIQHTVAEVHARIGIPVEIVEMGFRVLKKILYPVIFSSDYSAAEKLQVYHFSINSIDIAMEVMTRAFTFSDSSASKEDENYRIFSLLENAEEEKERQIASILSWEIDIIYKILLDSDLGSSLPLSQADFGLWFNHKGRHYFSGIAEVGHISRLIQDFDGIFNQTMRNTRNLNNRSLRVKFLLQIRNTVSQIITLLRELFEEVSRHEVGMDVLTKLLNRRFLPTIFKREIAHANRTGTPLSVLIIDVDKFKEINDTWGHNTGDEILRKVSQAFYDNVRSSDYVFRYGGDEFIIVLTEASENETLRTAERIRSRVEKTKLKAANGEDIALSLSIGAAMFNGHPDYERLIQIADEALYIAKRRGRNRVELWKASL.

Histidine 98 contacts heme. Residues 325 to 458 enclose the GGDEF domain; it reads TPLSVLIIDV…GRNRVELWKA (134 aa). Aspartate 333 serves as a coordination point for Mg(2+). Positions 341 and 350 each coordinate substrate. Aspartate 376 lines the Mg(2+) pocket. Aspartate 376 serves as the catalytic Proton acceptor.

It depends on heme as a cofactor. Requires Mg(2+) as cofactor.

It carries out the reaction 2 GTP = 3',3'-c-di-GMP + 2 diphosphate. It functions in the pathway purine metabolism; 3',5'-cyclic di-GMP biosynthesis. In terms of biological role, globin-coupled heme-based oxygen sensor protein displaying diguanylate cyclase (DGC) activity in response to oxygen availability. Thus, catalyzes the synthesis of cyclic diguanylate (c-di-GMP) via the condensation of 2 GTP molecules. Cyclic-di-GMP is a second messenger which controls cell surface-associated traits in bacteria. The polypeptide is Diguanylate cyclase DosC (dosC) (Shigella boydii serotype 4 (strain Sb227)).